A 353-amino-acid polypeptide reads, in one-letter code: uncharacterized protein (353 aa).

Positions 233 to 245 (ASCSNNEPSASLE) are enriched in polar residues. The interval 233 to 265 (ASCSNNEPSASLESESRHFSPVNSLSPSSLSTD) is disordered. Over residues 252 to 263 (SPVNSLSPSSLS) the composition is skewed to low complexity.

This is an uncharacterized protein from Saccharomyces cerevisiae (strain ATCC 204508 / S288c) (Baker's yeast).